A 188-amino-acid chain; its full sequence is Ribose 1,5-bisphosphate phosphokinase PhnN (188 aa).

It belongs to the ribose 1,5-bisphosphokinase family.

It carries out the reaction alpha-D-ribose 1,5-bisphosphate + ATP = 5-phospho-alpha-D-ribose 1-diphosphate + ADP. The protein operates within metabolic intermediate biosynthesis; 5-phospho-alpha-D-ribose 1-diphosphate biosynthesis; 5-phospho-alpha-D-ribose 1-diphosphate from D-ribose 5-phosphate (route II): step 3/3. In terms of biological role, catalyzes the phosphorylation of ribose 1,5-bisphosphate to 5-phospho-D-ribosyl alpha-1-diphosphate (PRPP). This chain is Ribose 1,5-bisphosphate phosphokinase PhnN, found in Dickeya zeae (strain Ech586) (Dickeya dadantii (strain Ech586)).